A 507-amino-acid chain; its full sequence is Xaa-Pro aminopeptidase 3 (507 aa).

The N-terminal 31 residues, 1–31 (MPWLLSAPKLVPAVANVRGLSGCMLCSQRRY), are a transit peptide targeting the mitochondrion. The interaction with TNFRSF1B stretch occupies residues 54 to 79 (HPHLLRPGEVTPGLSQVEYALRRHKL). 7 residues coordinate substrate: Tyr-300, Asp-331, Asp-342, His-424, His-431, Glu-451, and Glu-475. Positions 331, 342, and 424 each coordinate Mn(2+). Glu-451 and Glu-475 together coordinate Mn(2+).

The protein belongs to the peptidase M24B family. Homodimer. Isoform 1 interacts with TNFRSF1B/TNFR2 (activated) and TRAF2. Mn(2+) serves as cofactor. As to expression, isoform 1 and isoform 2 are widely expressed, with isoform 1 being more abundant.

It localises to the mitochondrion. It is found in the cytoplasm. It carries out the reaction Release of any N-terminal amino acid, including proline, that is linked to proline, even from a dipeptide or tripeptide.. Functionally, catalyzes the removal of a penultimate prolyl residue from the N-termini of peptides, such as Leu-Pro-Ala. Also shows low activity towards peptides with Ala or Ser at the P1 position. Promotes TNFRSF1B-mediated phosphorylation of MAPK8/JNK1 and MAPK9/JNK2, suggesting a function as an adapter protein for TNFRSF1B; the effect is independent of XPNPEP3 peptidase activity. May inhibit apoptotic cell death induced via TNF-TNFRSF1B signaling. The polypeptide is Xaa-Pro aminopeptidase 3 (XPNPEP3) (Homo sapiens (Human)).